The sequence spans 186 residues: Translation initiation factor IF-3 (186 aa).

It belongs to the IF-3 family. In terms of assembly, monomer.

It is found in the cytoplasm. Its function is as follows. IF-3 binds to the 30S ribosomal subunit and shifts the equilibrium between 70S ribosomes and their 50S and 30S subunits in favor of the free subunits, thus enhancing the availability of 30S subunits on which protein synthesis initiation begins. In Borreliella afzelii (strain PKo) (Borrelia afzelii), this protein is Translation initiation factor IF-3.